Here is a 340-residue protein sequence, read N- to C-terminus: 4-amino-5-hydroxymethyl-2-methylpyrimidine phosphate synthase THI5 (340 aa).

An N6-(pyridoxal phosphate)lysine modification is found at Lys62. The active site involves His66. 115–118 (GEFG) lines the pyridoxal 5'-phosphate pocket. The CCCFC; essential for catalytic activity, may be the site of iron coordination motif lies at 195–199 (CCCFC).

It belongs to the NMT1/THI5 family. In terms of assembly, homodimer. It depends on Fe cation as a cofactor.

The catalysed reaction is N(6)-(pyridoxal phosphate)-L-lysyl-[4-amino-5-hydroxymethyl-2-methylpyrimidine phosphate synthase] + L-histidyl-[4-amino-5-hydroxymethyl-2-methylpyrimidine phosphate synthase] + 2 Fe(3+) + 4 H2O = L-lysyl-[4-amino-5-hydroxymethyl-2-methylpyrimidine phosphate synthase] + (2S)-2-amino-5-hydroxy-4-oxopentanoyl-[4-amino-5-hydroxymethyl-2-methylpyrimidine phosphate synthase] + 4-amino-2-methyl-5-(phosphooxymethyl)pyrimidine + 3-oxopropanoate + 2 Fe(2+) + 2 H(+). It functions in the pathway cofactor biosynthesis; thiamine diphosphate biosynthesis. In terms of biological role, responsible for the formation of the pyrimidine heterocycle in the thiamine biosynthesis pathway. Catalyzes the formation of hydroxymethylpyrimidine phosphate (HMP-P) from histidine and pyridoxal phosphate (PLP). The protein uses PLP and the active site histidine to form HMP-P, generating an inactive enzyme. The enzyme can only undergo a single turnover, which suggests it is a suicide enzyme. The sequence is that of 4-amino-5-hydroxymethyl-2-methylpyrimidine phosphate synthase THI5 from Saccharomyces cerevisiae (strain ATCC 204508 / S288c) (Baker's yeast).